Here is a 328-residue protein sequence, read N- to C-terminus: Formimidoylglutamase (328 aa).

Mn(2+)-binding residues include histidine 133, aspartate 159, histidine 161, aspartate 163, aspartate 253, and aspartate 255.

It belongs to the arginase family. Requires Mn(2+) as cofactor.

The enzyme catalyses N-formimidoyl-L-glutamate + H2O = formamide + L-glutamate. Its pathway is amino-acid degradation; L-histidine degradation into L-glutamate; L-glutamate from N-formimidoyl-L-glutamate (hydrolase route): step 1/1. Catalyzes the conversion of N-formimidoyl-L-glutamate to L-glutamate and formamide. This chain is Formimidoylglutamase, found in Streptococcus pyogenes serotype M6 (strain ATCC BAA-946 / MGAS10394).